The sequence spans 240 residues: Ribosomal RNA small subunit methyltransferase G (240 aa).

Residues glycine 77, phenylalanine 82, 128 to 129 (AE), and arginine 148 each bind S-adenosyl-L-methionine. A disordered region spans residues 217 to 240 (EKRSKTPKKYPRKAGTPNKSPLLK).

It belongs to the methyltransferase superfamily. RNA methyltransferase RsmG family.

The protein resides in the cytoplasm. Its function is as follows. Specifically methylates the N7 position of guanine in position 535 of 16S rRNA. This Staphylococcus carnosus (strain TM300) protein is Ribosomal RNA small subunit methyltransferase G.